The sequence spans 203 residues: Ribosomal RNA small subunit methyltransferase G (203 aa).

Residues Gly-73, Leu-78, 124 to 125, and Arg-139 each bind S-adenosyl-L-methionine; that span reads VE.

The protein belongs to the methyltransferase superfamily. RNA methyltransferase RsmG family.

It localises to the cytoplasm. It carries out the reaction guanosine(527) in 16S rRNA + S-adenosyl-L-methionine = N(7)-methylguanosine(527) in 16S rRNA + S-adenosyl-L-homocysteine. Functionally, specifically methylates the N7 position of guanine in position 527 of 16S rRNA. In Haemophilus influenzae (strain 86-028NP), this protein is Ribosomal RNA small subunit methyltransferase G.